The following is a 308-amino-acid chain: 4-hydroxy-3-methylbut-2-enyl diphosphate reductase (308 aa).

Residue cysteine 13 participates in [4Fe-4S] cluster binding. Residues histidine 42 and histidine 75 each contribute to the (2E)-4-hydroxy-3-methylbut-2-enyl diphosphate site. Residues histidine 42 and histidine 75 each contribute to the dimethylallyl diphosphate site. Isopentenyl diphosphate contacts are provided by histidine 42 and histidine 75. Residue cysteine 97 participates in [4Fe-4S] cluster binding. Residue histidine 125 participates in (2E)-4-hydroxy-3-methylbut-2-enyl diphosphate binding. Position 125 (histidine 125) interacts with dimethylallyl diphosphate. Position 125 (histidine 125) interacts with isopentenyl diphosphate. The active-site Proton donor is the glutamate 127. Threonine 165 contacts (2E)-4-hydroxy-3-methylbut-2-enyl diphosphate. Cysteine 195 contacts [4Fe-4S] cluster. 4 residues coordinate (2E)-4-hydroxy-3-methylbut-2-enyl diphosphate: serine 223, serine 224, asparagine 225, and serine 267. Dimethylallyl diphosphate-binding residues include serine 223, serine 224, asparagine 225, and serine 267. Positions 223, 224, 225, and 267 each coordinate isopentenyl diphosphate.

It belongs to the IspH family. [4Fe-4S] cluster is required as a cofactor.

It catalyses the reaction isopentenyl diphosphate + 2 oxidized [2Fe-2S]-[ferredoxin] + H2O = (2E)-4-hydroxy-3-methylbut-2-enyl diphosphate + 2 reduced [2Fe-2S]-[ferredoxin] + 2 H(+). The enzyme catalyses dimethylallyl diphosphate + 2 oxidized [2Fe-2S]-[ferredoxin] + H2O = (2E)-4-hydroxy-3-methylbut-2-enyl diphosphate + 2 reduced [2Fe-2S]-[ferredoxin] + 2 H(+). The protein operates within isoprenoid biosynthesis; dimethylallyl diphosphate biosynthesis; dimethylallyl diphosphate from (2E)-4-hydroxy-3-methylbutenyl diphosphate: step 1/1. It participates in isoprenoid biosynthesis; isopentenyl diphosphate biosynthesis via DXP pathway; isopentenyl diphosphate from 1-deoxy-D-xylulose 5-phosphate: step 6/6. Functionally, catalyzes the conversion of 1-hydroxy-2-methyl-2-(E)-butenyl 4-diphosphate (HMBPP) into a mixture of isopentenyl diphosphate (IPP) and dimethylallyl diphosphate (DMAPP). Acts in the terminal step of the DOXP/MEP pathway for isoprenoid precursor biosynthesis. This is 4-hydroxy-3-methylbut-2-enyl diphosphate reductase from Chlamydia muridarum (strain MoPn / Nigg).